The primary structure comprises 337 residues: Anthranilate phosphoribosyltransferase (337 aa).

Residues G81, 84–85 (GD), S89, 91–94 (NVST), 109–117 (KHGNRALSS), and A121 each bind 5-phospho-alpha-D-ribose 1-diphosphate. G81 is an anthranilate binding site. S93 provides a ligand contact to Mg(2+). N112 serves as a coordination point for anthranilate. R167 is a binding site for anthranilate. Residues D226 and E227 each contribute to the Mg(2+) site.

This sequence belongs to the anthranilate phosphoribosyltransferase family. In terms of assembly, homodimer. Mg(2+) serves as cofactor.

The catalysed reaction is N-(5-phospho-beta-D-ribosyl)anthranilate + diphosphate = 5-phospho-alpha-D-ribose 1-diphosphate + anthranilate. It participates in amino-acid biosynthesis; L-tryptophan biosynthesis; L-tryptophan from chorismate: step 2/5. Catalyzes the transfer of the phosphoribosyl group of 5-phosphorylribose-1-pyrophosphate (PRPP) to anthranilate to yield N-(5'-phosphoribosyl)-anthranilate (PRA). The polypeptide is Anthranilate phosphoribosyltransferase (Bradyrhizobium sp. (strain ORS 278)).